Consider the following 318-residue polypeptide: Protoheme IX farnesyltransferase (318 aa).

A run of 9 helical transmembrane segments spans residues 29–49 (IIPL…QGQV), 51–71 (PVLL…AQTI), 102–122 (LIFA…FANL), 123–143 (LAAS…THWL), 151–171 (IVIG…AVTG), 179–199 (LIFA…ALMI), 219–239 (ATVK…LLLV), 241–261 (PLHA…AVFI), and 280–300 (LFLY…VDSL).

The protein belongs to the UbiA prenyltransferase family. Protoheme IX farnesyltransferase subfamily.

Its subcellular location is the cell inner membrane. The catalysed reaction is heme b + (2E,6E)-farnesyl diphosphate + H2O = Fe(II)-heme o + diphosphate. Its pathway is porphyrin-containing compound metabolism; heme O biosynthesis; heme O from protoheme: step 1/1. Its function is as follows. Converts heme B (protoheme IX) to heme O by substitution of the vinyl group on carbon 2 of heme B porphyrin ring with a hydroxyethyl farnesyl side group. The sequence is that of Protoheme IX farnesyltransferase from Nostoc sp. (strain PCC 7120 / SAG 25.82 / UTEX 2576).